A 535-amino-acid chain; its full sequence is F-box protein At1g56610 (535 aa).

3 helical membrane passes run 3 to 23 (FALVLIFLFGFYLFLMKSSSI), 37 to 57 (VLLLVLRFLFSLIQILILCLF), and 82 to 102 (LAPHILSWLPTKTAVTVSLLF). The region spanning 73 to 119 (TELCDLPKCLAPHILSWLPTKTAVTVSLLFMKGWWRSEMKNLSSLKF) is the F-box; degenerate domain.

As to quaternary structure, part of a SCF (ASK-cullin-F-box) protein ligase complex. Interacts with ASK4.

The protein localises to the membrane. Its pathway is protein modification; protein ubiquitination. Component of SCF(ASK-cullin-F-box) E3 ubiquitin ligase complexes, which may mediate the ubiquitination and subsequent proteasomal degradation of target proteins. This is F-box protein At1g56610 from Arabidopsis thaliana (Mouse-ear cress).